The chain runs to 569 residues: Protein Noxp20 (569 aa).

3 disordered regions span residues 1 to 87, 102 to 126, and 165 to 208; these read MSDD…GEVT, GDTGSEIPLKEQDDAAVDPSSQAGR, and ANSA…GSRG. The residue at position 197 (T197) is a Phosphothreonine. Position 262 is a phosphoserine (S262). The segment at 404–439 is disordered; sequence VSIDVAKGSEEEEKEEGKEEKAEEPEEDKTGGQGAK.

This sequence belongs to the FAM114 family. As to expression, over-expressed in brain. Also detected in lung, stomach, and in a lower extent in testis and thymus.

It localises to the cytoplasm. Functionally, may play a role in neuronal cell development. In Mus musculus (Mouse), this protein is Protein Noxp20 (Fam114a1).